We begin with the raw amino-acid sequence, 205 residues long: MKKELILKALKLRDMGFPSGDIAEELNISVKTALYLTLNGEELLKAEESPKEDSEKLDIFLEWDNVRASSRRLRNISKIICDMLSDVEFDGVVGISSGGVPLATLISDELDKNFSIYVPKKHIHTEKEKTTGFIGQNMSSIVGKDVIIVDDVMTSGNSVKETIKYLKGIANPKKVFVVMDKSGIDEIEGVSIEHLFRTGVVDIKK.

The protein belongs to the purine/pyrimidine phosphoribosyltransferase family. GfcR subfamily.

The polypeptide is Transcriptional regulator GfcR (Methanococcus maripaludis (strain DSM 14266 / JCM 13030 / NBRC 101832 / S2 / LL)).